The chain runs to 968 residues: C-1-tetrahydrofolate synthase, cytoplasmic (968 aa).

A methylenetetrahydrofolate dehydrogenase and cyclohydrolase region spans residues 1–338 (MSAQYQRFLK…ERLAKSQWAL (338 aa)). Substrate is bound by residues 86-90 (YIRMK) and 133-135 (VQM). NADP(+)-binding positions include 205 to 207 (GRS) and Ser230. Position 305–309 (305–309 (PGGVG)) interacts with substrate. Positions 339 to 968 (QTLPLKPQRP…TETGEIEGLF (630 aa)) are formyltetrahydrofolate synthetase. Position 413-420 (413-420 (TPLGEGKT)) interacts with ATP.

In the N-terminal section; belongs to the tetrahydrofolate dehydrogenase/cyclohydrolase family. This sequence in the C-terminal section; belongs to the formate--tetrahydrofolate ligase family. In terms of assembly, homodimer. As to expression, present in all tissues.

It localises to the cytoplasm. The catalysed reaction is (6R)-5,10-methylene-5,6,7,8-tetrahydrofolate + NADP(+) = (6R)-5,10-methenyltetrahydrofolate + NADPH. The enzyme catalyses (6R)-5,10-methenyltetrahydrofolate + H2O = (6R)-10-formyltetrahydrofolate + H(+). It carries out the reaction (6S)-5,6,7,8-tetrahydrofolate + formate + ATP = (6R)-10-formyltetrahydrofolate + ADP + phosphate. It participates in one-carbon metabolism; tetrahydrofolate interconversion. The sequence is that of C-1-tetrahydrofolate synthase, cytoplasmic (pug) from Drosophila melanogaster (Fruit fly).